Consider the following 120-residue polypeptide: Large ribosomal subunit protein uL18 (120 aa).

It belongs to the universal ribosomal protein uL18 family. Part of the 50S ribosomal subunit; part of the 5S rRNA/L5/L18/L25 subcomplex. Contacts the 5S and 23S rRNAs.

Functionally, this is one of the proteins that bind and probably mediate the attachment of the 5S RNA into the large ribosomal subunit, where it forms part of the central protuberance. The chain is Large ribosomal subunit protein uL18 from Herminiimonas arsenicoxydans.